A 330-amino-acid polypeptide reads, in one-letter code: Heat-inducible transcription repressor HrcA (330 aa).

The protein belongs to the HrcA family.

In terms of biological role, negative regulator of class I heat shock genes (grpE-dnaK-dnaJ and groELS operons). Prevents heat-shock induction of these operons. The chain is Heat-inducible transcription repressor HrcA from Synechococcus sp. (strain RCC307).